A 72-amino-acid polypeptide reads, in one-letter code: MTKEDNIEMQGIVIDTLPNTMFRVELENKHVITAHISGKMRKNYIRILTGDKVTIELTPYDLTKGRIIFRSR.

Positions 1-72 (MTKEDNIEMQ…TKGRIIFRSR (72 aa)) constitute an S1-like domain.

It belongs to the IF-1 family. In terms of assembly, component of the 30S ribosomal translation pre-initiation complex which assembles on the 30S ribosome in the order IF-2 and IF-3, IF-1 and N-formylmethionyl-tRNA(fMet); mRNA recruitment can occur at any time during PIC assembly.

The protein resides in the cytoplasm. In terms of biological role, one of the essential components for the initiation of protein synthesis. Stabilizes the binding of IF-2 and IF-3 on the 30S subunit to which N-formylmethionyl-tRNA(fMet) subsequently binds. Helps modulate mRNA selection, yielding the 30S pre-initiation complex (PIC). Upon addition of the 50S ribosomal subunit IF-1, IF-2 and IF-3 are released leaving the mature 70S translation initiation complex. This is Translation initiation factor IF-1 from Buchnera aphidicola subsp. Schizaphis graminum (strain Sg).